We begin with the raw amino-acid sequence, 314 residues long: 1,4-dihydroxy-2-naphthoyl-CoA synthase (314 aa).

Residues Arg-58, 103 to 107 (SGGDQ), Tyr-115, 157 to 161 (WAAGG), Thr-184, Ser-190, Tyr-287, and Lys-302 contribute to the substrate site.

Belongs to the enoyl-CoA hydratase/isomerase family. MenB subfamily.

It catalyses the reaction 2-succinylbenzoyl-CoA + H(+) = 1,4-dihydroxy-2-naphthoyl-CoA + H2O. The protein operates within quinol/quinone metabolism; 1,4-dihydroxy-2-naphthoate biosynthesis; 1,4-dihydroxy-2-naphthoate from chorismate: step 6/7. It functions in the pathway quinol/quinone metabolism; menaquinone biosynthesis. Converts o-succinylbenzoyl-CoA (OSB-CoA) to 1,4-dihydroxy-2-naphthoyl-CoA (DHNA-CoA). This Mycobacterium tuberculosis (strain CDC 1551 / Oshkosh) protein is 1,4-dihydroxy-2-naphthoyl-CoA synthase.